A 314-amino-acid chain; its full sequence is Olfactory receptor 14A2 (314 aa).

The Extracellular portion of the chain corresponds to Met-1–Gly-26. N-linked (GlcNAc...) asparagine glycosylation occurs at Asn-3. Residues Val-27–Ile-47 form a helical membrane-spanning segment. Over Thr-48–Thr-55 the chain is Cytoplasmic. A helical membrane pass occupies residues Pro-56 to Ile-76. Residues Pro-77 to Ser-91 lie on the Extracellular side of the membrane. Asn-83 is a glycosylation site (N-linked (GlcNAc...) asparagine). A helical transmembrane segment spans residues Ile-92 to Ile-112. A disulfide bridge links Cys-95 with Cys-177. The Cytoplasmic segment spans residues Leu-113–Thr-136. Residues Gly-137–Tyr-157 form a helical membrane-spanning segment. The Extracellular segment spans residues Thr-158–Val-193. The helical transmembrane segment at Ile-194–Ile-214 threads the bilayer. Topologically, residues Ser-215–Ser-237 are cytoplasmic. A helical transmembrane segment spans residues Thr-238–Leu-258. At Lys-259–Val-267 the chain is on the extracellular side. The chain crosses the membrane as a helical span at residues Ile-268–Leu-290. Residues Arg-291–Ile-314 are Cytoplasmic-facing.

It belongs to the G-protein coupled receptor 1 family.

The protein resides in the cell membrane. Functionally, odorant receptor. The polypeptide is Olfactory receptor 14A2 (OR14A2) (Homo sapiens (Human)).